Consider the following 264-residue polypeptide: Cercarial protease (264 aa).

Positions 1–19 (MSNRWRFVVVVTLFTYCLT) are cleaved as a signal peptide. Residues 20-27 (FERVSTWL) constitute a propeptide that is removed on maturation. The Peptidase S1 domain maps to 28 to 264 (IRSGEPVQHP…RMLDFVRSNI (237 aa)). A disulfide bridge connects residues Cys53 and Cys69. Active-site charge relay system residues include His68 and Asp126. Residues Cys192 and Cys202 are joined by a disulfide bond. The Charge relay system role is filled by Ser218.

Belongs to the peptidase S1 family. As to expression, acetabular (penetration) glands.

Its activity is regulated as follows. Activated by an autocatalytic mechanism. This protease cleaves elastin and thus facilitates penetration of schistosome parasite larvae through elastin-rich tissue of the host. The protein is Cercarial protease of Schistosoma mansoni (Blood fluke).